A 131-amino-acid chain; its full sequence is Interleukin-13 (131 aa).

An N-terminal signal peptide occupies residues 1 to 18 (MALWLTVVIALTCLGGLA). Asn-38, Asn-48, Asn-56, and Asn-71 each carry an N-linked (GlcNAc...) asparagine glycan. Cystine bridges form between Cys-47–Cys-75 and Cys-63–Cys-89.

This sequence belongs to the IL-4/IL-13 family. Interacts with IL13RA2.

It is found in the secreted. Functionally, cytokine that plays important roles in allergic inflammation and immune response to parasite infection. Synergizes with IL2 in regulating interferon-gamma synthesis. Stimulates B-cell proliferation, and activation of eosinophils, basophils, and mast cells. Plays an important role in controlling IL33 activity by modulating the production of transmembrane and soluble forms of interleukin-1 receptor-like 1/IL1RL1. Displays the capacity to antagonize Th1-driven proinflammatory immune response and downregulates synthesis of many proinflammatory cytokines including IL1, IL6, IL10, IL12 and TNF-alpha through a mechanism that partially involves suppression of NF-kappa-B. Also functions on nonhematopoietic cells, including endothelial cells where it induces vascular cell adhesion protein 1/VCAM1, which is important in the recruitment of eosinophils. Exerts its biological effects through its receptors which comprises the IL4R chain and the IL13RA1 chain, to activate JAK1 and TYK2, leading to the activation of STAT6. Aside from IL13RA1, another receptor IL13RA2 acts as a high affinity decoy for IL13 and mediates internalization and depletion of extracellular IL13. The polypeptide is Interleukin-13 (IL13) (Canis lupus familiaris (Dog)).